A 474-amino-acid chain; its full sequence is Glutamate--tRNA ligase (474 aa).

Residues P9 to G19 carry the 'HIGH' region motif. Positions K240–R244 match the 'KMSKS' region motif. Position 243 (K243) interacts with ATP.

It belongs to the class-I aminoacyl-tRNA synthetase family. Glutamate--tRNA ligase type 1 subfamily. Monomer.

It localises to the cytoplasm. The catalysed reaction is tRNA(Glu) + L-glutamate + ATP = L-glutamyl-tRNA(Glu) + AMP + diphosphate. In terms of biological role, catalyzes the attachment of glutamate to tRNA(Glu) in a two-step reaction: glutamate is first activated by ATP to form Glu-AMP and then transferred to the acceptor end of tRNA(Glu). The chain is Glutamate--tRNA ligase from Vibrio vulnificus (strain CMCP6).